Consider the following 971-residue polypeptide: uncharacterized protein (971 aa).

13 consecutive transmembrane segments (helical) span residues 11 to 31 (WLLK…GIIF), 516 to 536 (FASS…ALGI), 547 to 567 (LALA…GGVV), 569 to 589 (VFSF…LITL), 615 to 635 (FFTM…VIYL), 651 to 671 (AITS…LFVS), 727 to 747 (LLFI…LYLG), 763 to 783 (STGI…YSLP), 795 to 815 (IALI…NFIF), 817 to 837 (IDQS…FFQA), 878 to 898 (IGSS…FGGI), 900 to 920 (GTIN…SVFV), and 923 to 943 (LPLF…YVQI).

Its subcellular location is the cell membrane. This is an uncharacterized protein from Mycoplasma pneumoniae (strain ATCC 29342 / M129 / Subtype 1) (Mycoplasmoides pneumoniae).